Here is a 119-residue protein sequence, read N- to C-terminus: Holo-[acyl-carrier-protein] synthase (119 aa).

Mg(2+)-binding residues include aspartate 8 and glutamate 58.

The protein belongs to the P-Pant transferase superfamily. AcpS family. Requires Mg(2+) as cofactor.

It localises to the cytoplasm. The enzyme catalyses apo-[ACP] + CoA = holo-[ACP] + adenosine 3',5'-bisphosphate + H(+). In terms of biological role, transfers the 4'-phosphopantetheine moiety from coenzyme A to a Ser of acyl-carrier-protein. This is Holo-[acyl-carrier-protein] synthase from Lactobacillus johnsonii (strain CNCM I-12250 / La1 / NCC 533).